Reading from the N-terminus, the 193-residue chain is Ribosomal RNA small subunit methyltransferase G (193 aa).

S-adenosyl-L-methionine-binding positions include Gly-72, Phe-77, 123–124 (IE), and Arg-137.

It belongs to the methyltransferase superfamily. RNA methyltransferase RsmG family.

It localises to the cytoplasm. The catalysed reaction is guanosine(527) in 16S rRNA + S-adenosyl-L-methionine = N(7)-methylguanosine(527) in 16S rRNA + S-adenosyl-L-homocysteine. Specifically methylates the N7 position of guanine in position 527 of 16S rRNA. This is Ribosomal RNA small subunit methyltransferase G from Wolinella succinogenes (strain ATCC 29543 / DSM 1740 / CCUG 13145 / JCM 31913 / LMG 7466 / NCTC 11488 / FDC 602W) (Vibrio succinogenes).